The following is a 373-amino-acid chain: Probable pectin lyase C (373 aa).

Residues Met1 to Ala18 form the signal peptide. 2 cysteine pairs are disulfide-bonded: Cys81/Cys100 and Cys90/Cys220. Asn123 carries an N-linked (GlcNAc...) asparagine glycan. The active site involves Arg250. Cys316 and Cys324 are oxidised to a cystine.

Belongs to the polysaccharide lyase 1 family.

It localises to the secreted. The enzyme catalyses Eliminative cleavage of (1-&gt;4)-alpha-D-galacturonan methyl ester to give oligosaccharides with 4-deoxy-6-O-methyl-alpha-D-galact-4-enuronosyl groups at their non-reducing ends.. In terms of biological role, pectinolytic enzymes consist of four classes of enzymes: pectin lyase, polygalacturonase, pectin methylesterase and rhamnogalacturonase. Among pectinolytic enzymes, pectin lyase is the most important in depolymerization of pectin, since it cleaves internal glycosidic bonds of highly methylated pectins. The polypeptide is Probable pectin lyase C (pelC) (Aspergillus niger (strain ATCC MYA-4892 / CBS 513.88 / FGSC A1513)).